The chain runs to 416 residues: UDP-N-acetylglucosamine 1-carboxyvinyltransferase (416 aa).

22 to 23 (KN) is a binding site for phosphoenolpyruvate. Position 92 (arginine 92) interacts with UDP-N-acetyl-alpha-D-glucosamine. Cysteine 116 acts as the Proton donor in catalysis. Cysteine 116 is modified (2-(S-cysteinyl)pyruvic acid O-phosphothioketal). UDP-N-acetyl-alpha-D-glucosamine is bound by residues 121–125 (RPVDQ), aspartate 304, and isoleucine 326.

It belongs to the EPSP synthase family. MurA subfamily.

It localises to the cytoplasm. The enzyme catalyses phosphoenolpyruvate + UDP-N-acetyl-alpha-D-glucosamine = UDP-N-acetyl-3-O-(1-carboxyvinyl)-alpha-D-glucosamine + phosphate. It participates in cell wall biogenesis; peptidoglycan biosynthesis. In terms of biological role, cell wall formation. Adds enolpyruvyl to UDP-N-acetylglucosamine. This chain is UDP-N-acetylglucosamine 1-carboxyvinyltransferase, found in Cupriavidus pinatubonensis (strain JMP 134 / LMG 1197) (Cupriavidus necator (strain JMP 134)).